The primary structure comprises 249 residues: MQSQRERPREDRVHEETRGADHAHPSVPHAAAAASATATETATRTMSLHAGGVVVVDGKEKGKKEEGEGKRKGKAPATAEAVRGRARLRGEQLRQLHEIFLRFDLDGDGSLTKLELAALLRSLGLRPAAGDEIHALIAAIDADGNGTVEFDELASSLADLILGPCRPSVAVDQAELAEAFRAFDRDGNGFISAAELARSMARMGHPICYAELTDMMREADTDGDGLISFEEFTAIMAKSALDFLGLAAL.

Over residues 1–24 (MQSQRERPREDRVHEETRGADHAH) the composition is skewed to basic and acidic residues. The segment at 1 to 80 (MQSQRERPRE…RKGKAPATAE (80 aa)) is disordered. The span at 30-56 (AAAAASATATETATRTMSLHAGGVVVV) shows a compositional bias: low complexity. The span at 57 to 70 (DGKEKGKKEEGEGK) shows a compositional bias: basic and acidic residues. EF-hand domains lie at 91–126 (EQLR…LGLR), 128–163 (AAGD…LILG), 171–206 (VDQA…MGHP), and 207–242 (ICYA…SALD). Ca(2+) is bound by residues D104, D106, D108, S110, E115, D141, D143, N145, T147, E152, D184, D186, N188, E195, D220, D222, D224, and E231.

Functionally, potential calcium sensor. This chain is Probable calcium-binding protein CML12 (CML12), found in Oryza sativa subsp. japonica (Rice).